A 76-amino-acid chain; its full sequence is Large ribosomal subunit protein bL28 (76 aa).

The tract at residues 21–42 is disordered; sequence RGKAKKEGGVGKHITKTSRRRQ. The segment covering 33-42 has biased composition (basic residues); it reads HITKTSRRRQ.

Belongs to the bacterial ribosomal protein bL28 family.

This Halothermothrix orenii (strain H 168 / OCM 544 / DSM 9562) protein is Large ribosomal subunit protein bL28.